The sequence spans 238 residues: Ribonuclease PH (238 aa).

Phosphate-binding positions include Arg86 and 124 to 126 (GTR).

The protein belongs to the RNase PH family. As to quaternary structure, homohexameric ring arranged as a trimer of dimers.

The catalysed reaction is tRNA(n+1) + phosphate = tRNA(n) + a ribonucleoside 5'-diphosphate. Its function is as follows. Phosphorolytic 3'-5' exoribonuclease that plays an important role in tRNA 3'-end maturation. Removes nucleotide residues following the 3'-CCA terminus of tRNAs; can also add nucleotides to the ends of RNA molecules by using nucleoside diphosphates as substrates, but this may not be physiologically important. Probably plays a role in initiation of 16S rRNA degradation (leading to ribosome degradation) during starvation. The chain is Ribonuclease PH from Nitrosospira multiformis (strain ATCC 25196 / NCIMB 11849 / C 71).